The primary structure comprises 443 residues: 23S rRNA (uracil(1939)-C(5))-methyltransferase RlmD (443 aa).

A TRAM domain is found at 10–68 (RVTTKQTLTVTVNSLDPFGQGVAHHQGKAIFIPGALPGEQAEIELTEQKRQYSRGKLKR). Residues Cys81, Cys87, Cys90, and Cys168 each coordinate [4Fe-4S] cluster. S-adenosyl-L-methionine is bound by residues Gln271, Phe300, Asn305, Glu321, Asn348, and Asp369. Cys395 functions as the Nucleophile in the catalytic mechanism.

The protein belongs to the class I-like SAM-binding methyltransferase superfamily. RNA M5U methyltransferase family. RlmD subfamily.

It catalyses the reaction uridine(1939) in 23S rRNA + S-adenosyl-L-methionine = 5-methyluridine(1939) in 23S rRNA + S-adenosyl-L-homocysteine + H(+). In terms of biological role, catalyzes the formation of 5-methyl-uridine at position 1939 (m5U1939) in 23S rRNA. This chain is 23S rRNA (uracil(1939)-C(5))-methyltransferase RlmD, found in Yersinia enterocolitica serotype O:8 / biotype 1B (strain NCTC 13174 / 8081).